We begin with the raw amino-acid sequence, 74 residues long: MKQSINIQDQFLNQLRKENTFVTLYLLNGFQLRGLIKGFDNFTVLLETEGKQQLIYKHAISTFMPQKNVAIELE.

The region spanning Asp9 to Val69 is the Sm domain.

Belongs to the Hfq family. As to quaternary structure, homohexamer.

RNA chaperone that binds small regulatory RNA (sRNAs) and mRNAs to facilitate mRNA translational regulation in response to envelope stress, environmental stress and changes in metabolite concentrations. Also binds with high specificity to tRNAs. The polypeptide is RNA-binding protein Hfq (Bacillus cytotoxicus (strain DSM 22905 / CIP 110041 / 391-98 / NVH 391-98)).